Reading from the N-terminus, the 240-residue chain is Aspartate/glutamate leucyltransferase (240 aa).

Belongs to the R-transferase family. Bpt subfamily.

It localises to the cytoplasm. The catalysed reaction is N-terminal L-glutamyl-[protein] + L-leucyl-tRNA(Leu) = N-terminal L-leucyl-L-glutamyl-[protein] + tRNA(Leu) + H(+). It carries out the reaction N-terminal L-aspartyl-[protein] + L-leucyl-tRNA(Leu) = N-terminal L-leucyl-L-aspartyl-[protein] + tRNA(Leu) + H(+). Its function is as follows. Functions in the N-end rule pathway of protein degradation where it conjugates Leu from its aminoacyl-tRNA to the N-termini of proteins containing an N-terminal aspartate or glutamate. In Gluconobacter oxydans (strain 621H) (Gluconobacter suboxydans), this protein is Aspartate/glutamate leucyltransferase.